The chain runs to 448 residues: MDKLDLVNDGLDIIDFIQKNQKEIQKTYGRSSIQQPSTKDRTRAWEDFLQSTSGEHEQAEGGMPKNDGGTEGRNVEDLSSVTSSDGTIGQRVSNTRAWAEDPDDIQLDPMVTDVVYHDHGGECTGHGPSSSPERGWSYHMSGTHDGNVRAVPDTKVLPNAPKTTVPEEVREIDLIGLEDKFASAGLNPAAVPFVPKNQSTPTEEPPVIPEYYYGSGRRGDLSKSPPRGNVNLDSIKIYTSDDEDENQLEYEDEFAKSSSEVVIDTTPEDNDSINQEEVVGDPSDQGLEHPFPLGKFPEKEETPDVRRKDSLMQDSCKRGGVPKRLPMLSEEFECSGSDDPIIQELEREGSHPGGSLRLREPPQSSGNSRNQPDRQLKTGDAASPGGVQRPGTPMPKSRIMPIKKGAQTRSLNMLGRKTCLGRRVVQPGMFADYPPTKKARVLLRRMSN.

Disordered stretches follow at residues 26 to 104 (KTYG…DPDD) and 193 to 406 (FVPK…KKGA). Composition is skewed to polar residues over residues 28–37 (YGRSSIQQPS) and 77–96 (DLSS…SNTR). The segment covering 240–252 (SDDEDENQLEYED) has biased composition (acidic residues). A Phosphoserine; by host modification is found at Ser257. The segment covering 296–317 (FPEKEETPDVRRKDSLMQDSCK) has biased composition (basic and acidic residues). A Phosphoserine; by host modification is found at Ser350.

The protein is Protein W (P/V/C) of Hendra virus (isolate Horse/Autralia/Hendra/1994).